Here is a 53-residue protein sequence, read N- to C-terminus: UPF0391 membrane protein Patl_1732 (53 aa).

2 helical membrane-spanning segments follow: residues Trp-4–Ala-24 and Ala-28–Met-48.

The protein belongs to the UPF0391 family.

It localises to the cell membrane. The polypeptide is UPF0391 membrane protein Patl_1732 (Pseudoalteromonas atlantica (strain T6c / ATCC BAA-1087)).